Reading from the N-terminus, the 241-residue chain is Homeobox protein TGIF2LX (241 aa).

2 disordered regions span residues 1–58 (MEAA…GNLP) and 127–207 (GKGA…ELVS). Positions 10-39 (ETQSPVQKDSPAKTQSPAQDTSIMSRNNAD) are enriched in polar residues. Residues 48–111 (EHKKKRKGNL…INARRRILPD (64 aa)) constitute a DNA-binding region (homeobox; TALE-type).

The protein belongs to the TALE/TGIF homeobox family.

Its subcellular location is the nucleus. In terms of biological role, may have a transcription role in testis. The polypeptide is Homeobox protein TGIF2LX (TGIF2LX) (Pan paniscus (Pygmy chimpanzee)).